Reading from the N-terminus, the 171-residue chain is Co-chaperone protein HscB homolog (171 aa).

The region spanning 2 to 74 (NYFELFGLPI…LRRAEYLLSL (73 aa)) is the J domain.

This sequence belongs to the HscB family. In terms of assembly, interacts with HscA and stimulates its ATPase activity.

Co-chaperone involved in the maturation of iron-sulfur cluster-containing proteins. Seems to help targeting proteins to be folded toward HscA. The protein is Co-chaperone protein HscB homolog of Vibrio cholerae serotype O1 (strain M66-2).